A 328-amino-acid chain; its full sequence is Putative GDP-L-fucose synthase 2 (328 aa).

A2 is subject to N-acetylalanine. G26 to G32 provides a ligand contact to NADP(+). Y152 functions as the Proton donor/acceptor in the catalytic mechanism. Residues K156, P179 to L182, and H195 contribute to the NADP(+) site. The substrate site is built by R203, W218, R225, and D285.

It belongs to the NAD(P)-dependent epimerase/dehydratase family. Fucose synthase subfamily. Homodimer.

The enzyme catalyses GDP-beta-L-fucose + NADP(+) = GDP-4-dehydro-alpha-D-rhamnose + NADPH + H(+). The protein operates within nucleotide-sugar biosynthesis; GDP-L-fucose biosynthesis via de novo pathway; GDP-L-fucose from GDP-alpha-D-mannose: step 2/2. Its function is as follows. Catalyzes the two-step NADP-dependent conversion of GDP-4-dehydro-6-deoxy-D-mannose to GDP-fucose, involving an epimerase and a reductase reaction. This is Putative GDP-L-fucose synthase 2 (GER2) from Arabidopsis thaliana (Mouse-ear cress).